The chain runs to 496 residues: Maturase K (496 aa).

Belongs to the intron maturase 2 family. MatK subfamily.

The protein localises to the plastid. It localises to the chloroplast. Usually encoded in the trnK tRNA gene intron. Probably assists in splicing its own and other chloroplast group II introns. The sequence is that of Maturase K from Paeonia cambessedesii (Majorcan peony).